The primary structure comprises 127 residues: I-Kappa-B like protein J1 (127 aa).

2 ANK repeats span residues 43–76 (HGNT…DLDE) and 81–111 (DGDT…RFGS).

Belongs to the polydnaviridae I-Kappa-B-like protein family.

In terms of biological role, suppresses the host immune response through NF-kappa-B inactivation. Possesses ankyrin repeat domains required for NF-kappa-B binding but lacks the regulatory regions required for dissociation from NF-kappa-B and degradation. Therefore, prevents host NF-kappa-B release and subsequent activation. In Microplitis demolitor (Parasitoid wasp), this protein is I-Kappa-B like protein J1 (J2).